A 271-amino-acid polypeptide reads, in one-letter code: 2-dehydro-3-deoxyphosphooctonate aldolase (271 aa).

The protein belongs to the KdsA family.

The protein resides in the cytoplasm. The catalysed reaction is D-arabinose 5-phosphate + phosphoenolpyruvate + H2O = 3-deoxy-alpha-D-manno-2-octulosonate-8-phosphate + phosphate. It functions in the pathway carbohydrate biosynthesis; 3-deoxy-D-manno-octulosonate biosynthesis; 3-deoxy-D-manno-octulosonate from D-ribulose 5-phosphate: step 2/3. It participates in bacterial outer membrane biogenesis; lipopolysaccharide biosynthesis. In Campylobacter jejuni subsp. jejuni serotype O:6 (strain 81116 / NCTC 11828), this protein is 2-dehydro-3-deoxyphosphooctonate aldolase.